The primary structure comprises 245 residues: tRNA pseudouridine synthase A (245 aa).

The active-site Nucleophile is aspartate 52. Substrate is bound at residue tyrosine 110.

The protein belongs to the tRNA pseudouridine synthase TruA family. In terms of assembly, homodimer.

The enzyme catalyses uridine(38/39/40) in tRNA = pseudouridine(38/39/40) in tRNA. In terms of biological role, formation of pseudouridine at positions 38, 39 and 40 in the anticodon stem and loop of transfer RNAs. This Borrelia hermsii (strain HS1 / DAH) protein is tRNA pseudouridine synthase A.